The following is a 195-amino-acid chain: Phosphoheptose isomerase (195 aa).

One can recognise an SIS domain in the interval 36-195; the sequence is VSKVLQSGNT…IVEYNLFKME (160 aa). 51–53 lines the substrate pocket; that stretch reads NGG. Zn(2+) is bound by residues H60 and E64. Residues E64, 95-96, 121-123, S126, and Q173 each bind substrate; these read ND and STS. Zn(2+) is bound by residues Q173 and H181.

It belongs to the SIS family. GmhA subfamily. The cofactor is Zn(2+).

Its subcellular location is the cytoplasm. The enzyme catalyses 2 D-sedoheptulose 7-phosphate = D-glycero-alpha-D-manno-heptose 7-phosphate + D-glycero-beta-D-manno-heptose 7-phosphate. It functions in the pathway carbohydrate biosynthesis; D-glycero-D-manno-heptose 7-phosphate biosynthesis; D-glycero-alpha-D-manno-heptose 7-phosphate and D-glycero-beta-D-manno-heptose 7-phosphate from sedoheptulose 7-phosphate: step 1/1. Its function is as follows. Catalyzes the isomerization of sedoheptulose 7-phosphate in D-glycero-D-manno-heptose 7-phosphate. This Leptospira borgpetersenii serovar Hardjo-bovis (strain JB197) protein is Phosphoheptose isomerase.